We begin with the raw amino-acid sequence, 395 residues long: Acetate kinase (395 aa).

A Mg(2+)-binding site is contributed by N8. An ATP-binding site is contributed by K15. Residue R89 coordinates substrate. D146 acts as the Proton donor/acceptor in catalysis. ATP-binding positions include 206–210, 281–283, and 329–333; these read HLGNG, DLR, and GIGEN. E382 is a binding site for Mg(2+).

Belongs to the acetokinase family. As to quaternary structure, homodimer. The cofactor is Mg(2+). Mn(2+) serves as cofactor.

It is found in the cytoplasm. It carries out the reaction acetate + ATP = acetyl phosphate + ADP. It participates in metabolic intermediate biosynthesis; acetyl-CoA biosynthesis; acetyl-CoA from acetate: step 1/2. Functionally, catalyzes the formation of acetyl phosphate from acetate and ATP. Can also catalyze the reverse reaction. This is Acetate kinase from Bacillus velezensis (strain DSM 23117 / BGSC 10A6 / LMG 26770 / FZB42) (Bacillus amyloliquefaciens subsp. plantarum).